Consider the following 100-residue polypeptide: Large ribosomal subunit protein uL23 (100 aa).

This sequence belongs to the universal ribosomal protein uL23 family. As to quaternary structure, part of the 50S ribosomal subunit. Contacts protein L29, and trigger factor when it is bound to the ribosome.

Functionally, one of the early assembly proteins it binds 23S rRNA. One of the proteins that surrounds the polypeptide exit tunnel on the outside of the ribosome. Forms the main docking site for trigger factor binding to the ribosome. This chain is Large ribosomal subunit protein uL23, found in Pasteurella multocida (strain Pm70).